A 646-amino-acid chain; its full sequence is Peptidylprolyl isomerase domain and WD repeat-containing protein 1 (646 aa).

Positions 1–50 (MATESGSDSQLRRRRRRDPEGSEKTELSEREPALAVAGSEENDDENEERW) are disordered. The residue at position 2 (Ala2) is an N-acetylalanine. A compositionally biased stretch (basic and acidic residues) spans 17–32 (RDPEGSEKTELSEREP). 4 WD repeats span residues 88-126 (MHRD…IEFV), 131-170 (SHLG…MINM), 221-260 (LHVS…YKFP), and 278-319 (KCKA…RVFD). Residues 490–645 (VSDSAIVHTS…EDVSIINITV (156 aa)) form the PPIase cyclophilin-type domain.

Belongs to the cyclophilin-type PPIase family. PPIL1 subfamily. As to quaternary structure, identified in the spliceosome C complex.

It localises to the nucleus. The catalysed reaction is [protein]-peptidylproline (omega=180) = [protein]-peptidylproline (omega=0). With respect to regulation, inhibited by cyclosporin A (CsA). PPIase that catalyzes the cis-trans isomerization of proline imidic peptide bonds in oligopeptides and may therefore assist protein folding. May be involved in pre-mRNA splicing. The polypeptide is Peptidylprolyl isomerase domain and WD repeat-containing protein 1 (Mus musculus (Mouse)).